Reading from the N-terminus, the 433-residue chain is Ribulose bisphosphate carboxylase/oxygenase activase, chloroplastic (433 aa).

The segment covering 1–20 (MAAAFSSTVGAPASTPTRSS) has biased composition (polar residues). A chloroplast-targeting transit peptide spans 1–53 (MAAAFSSTVGAPASTPTRSSFLGKKLNKPQVSAAVTYHGKSSSSNSRFKAMAA). Positions 1–60 (MAAAFSSTVGAPASTPTRSSFLGKKLNKPQVSAAVTYHGKSSSSNSRFKAMAAKEVDETK) are disordered. Residue 161 to 168 (GGKGQGKS) coordinates ATP.

Belongs to the RuBisCO activase family.

The protein localises to the plastid. It localises to the chloroplast stroma. Its function is as follows. Activation of RuBisCO (ribulose-1,5-bisphosphate carboxylase/oxygenase; EC 4.1.1.39) involves the ATP-dependent carboxylation of the epsilon-amino group of lysine leading to a carbamate structure. This Zea mays (Maize) protein is Ribulose bisphosphate carboxylase/oxygenase activase, chloroplastic (RCA1).